The following is a 147-amino-acid chain: 16 kDa phloem protein 2 (147 aa).

Residues 1–103 (MPHGTLEVVL…FVEGSIPPTA (103 aa)) form the C2 domain. D20, D26, D73, D75, and D81 together coordinate Ca(2+). A disordered region spans residues 126-147 (ENRSRGMDEESYGGWKNSEASY).

Requires Ca(2+) as cofactor.

Functionally, binds to both sense and antisense RNA. Can also bind sheared DNA and dodecamer DNA with a low affinity. Interacts with mesophyll plasmodesmata to mediate its own cell-to-cell transport and potentiate RNA trafficking. May play a role in plant defense signaling. The sequence is that of 16 kDa phloem protein 2 from Arabidopsis thaliana (Mouse-ear cress).